Reading from the N-terminus, the 396-residue chain is Probable sugar efflux transporter (396 aa).

Transmembrane regions (helical) follow at residues 15 to 35 (VVTLAVAAFIFNTTEFVPVGL), 50 to 70 (VGIMLTIYAWVVALMSLPFML), 81 to 101 (LICLFVVFIASHVLSFLSWSF), 103 to 123 (VLVISRIGVAFAHAIFWSITA), 136 to 156 (AQALSLIATGTALAMVLGLPL), 170 to 190 (FFAIGIGALITLLCLIKLLPL), 209 to 229 (PALMSIYLLTVVVVTAHYTAY), 246 to 266 (FATALLLLLGGAGIIGSVIFG), 275 to 295 (ALVSTAIALLLVCLALLLPAA), 299 to 319 (IHLGMLSIFWGIAMMIIGLGM), 333 to 353 (VAMALFSGIFNIGIGAGALVG), and 364 to 384 (MIGYVGAVPAFAALIWSIIIF).

The protein belongs to the major facilitator superfamily. SotB (TC 2.A.1.2) family.

It localises to the cell inner membrane. Involved in the efflux of sugars. The physiological role may be the reduction of the intracellular concentration of toxic sugars or sugar metabolites. This chain is Probable sugar efflux transporter, found in Escherichia coli O6:K15:H31 (strain 536 / UPEC).